The chain runs to 641 residues: ATP-dependent zinc metalloprotease FtsH (641 aa).

Residues 1-16 (MNKQQKPKRSPLRPDY) are Cytoplasmic-facing. A helical membrane pass occupies residues 17–37 (LVIVIIILLAIGMYFFFTEMM). The Extracellular portion of the chain corresponds to 38–131 (APKVKQFDEF…VSFVPHVSVD (94 aa)). Residues 132-152 (FWNIISTLLLIAAPIVLVVIM) form a helical membrane-spanning segment. The Cytoplasmic segment spans residues 153–641 (FRSMSSQSNK…EVEEDSKKSE (489 aa)). Position 222–229 (222–229 (GQPGTGKT)) interacts with ATP. Histidine 444 is a Zn(2+) binding site. The active site involves glutamate 445. Positions 448 and 520 each coordinate Zn(2+).

This sequence in the central section; belongs to the AAA ATPase family. It in the C-terminal section; belongs to the peptidase M41 family. As to quaternary structure, homohexamer. Zn(2+) is required as a cofactor.

It is found in the cell membrane. Acts as a processive, ATP-dependent zinc metallopeptidase for both cytoplasmic and membrane proteins. Plays a role in the quality control of integral membrane proteins. The polypeptide is ATP-dependent zinc metalloprotease FtsH (Acholeplasma laidlawii (strain PG-8A)).